The sequence spans 899 residues: Plasma membrane ATPase (899 aa).

The disordered stretch occupies residues 1 to 72 (MSAATEPTKE…TDPSYGLTSD (72 aa)). The Cytoplasmic segment spans residues 1 to 96 (MSAATEPTKE…SEETENLFVK (96 aa)). The span at 17-29 (DSDDEDEDIDQLI) shows a compositional bias: acidic residues. The helical transmembrane segment at 97–117 (FLMFFIGPIQFVMEAAAILAA) threads the bilayer. Over 118-121 (GLED) the chain is Extracellular. The helical transmembrane segment at 122 to 141 (WVDFGVICGLLFLNAAVGFI) threads the bilayer. The Cytoplasmic portion of the chain corresponds to 142–272 (QEYQAGSIVD…GSGHFTEVLN (131 aa)). The chain crosses the membrane as a helical span at residues 273–294 (GIGTILLILVIVTLLLVWVASF). Residues 295-305 (YRTNKIVRILR) are Extracellular-facing. A helical transmembrane segment spans residues 306 to 328 (YTLAITIVGVPVGLPAVVTTTMA). Residues 329–700 (VGAAYLAKKQ…IAILNRSLNI (372 aa)) lie on the Cytoplasmic side of the membrane. The 4-aspartylphosphate intermediate role is filled by aspartate 359. Positions 615 and 619 each coordinate Mg(2+). A helical transmembrane segment spans residues 701–719 (DLVVFIAIFADVATLAIAY). Over 720-735 (DNAPYSPKPVKWNLRR) the chain is Extracellular. Residues 736 to 755 (LWGMSVILGIILAIGTWITL) form a helical membrane-spanning segment. Residues 756–805 (TTMFVPKGGIIQNFGSIDGVLFLQISLTENWLIFITRAAGPFWSSIPSWQ) are Cytoplasmic-facing. Residues 806 to 826 (LSGAVLIVDIIATMFCLFGWW) traverse the membrane as a helical segment. At 827–838 (SQNWNDIVTVVR) the chain is on the extracellular side. Residues 839-855 (VWIFSFGVFCVMGGAYY) form a helical membrane-spanning segment. The Cytoplasmic segment spans residues 856 to 899 (MMSESEAFDRFMNGKSRRDKPSGRSVEDFLMAMQRVSTQHEKEN).

This sequence belongs to the cation transport ATPase (P-type) (TC 3.A.3) family. Type IIIA subfamily.

The protein localises to the cell membrane. It catalyses the reaction ATP + H2O + H(+)(in) = ADP + phosphate + 2 H(+)(out). With respect to regulation, activated by high pH or also by potassium ions when the medium pH is low. In terms of biological role, the plasma membrane ATPase of plants and fungi is a hydrogen ion pump. The proton gradient it generates drives the active transport of nutrients by H(+)-symport. The resulting external acidification and/or internal alkinization may mediate growth responses. This Kluyveromyces lactis (strain ATCC 8585 / CBS 2359 / DSM 70799 / NBRC 1267 / NRRL Y-1140 / WM37) (Yeast) protein is Plasma membrane ATPase (PMA1).